We begin with the raw amino-acid sequence, 546 residues long: Chaperonin GroEL (546 aa).

Residues 30–33, lysine 51, 87–91, glycine 415, 479–481, and aspartate 495 each bind ATP; these read TLGP, DGTTT, and NAA.

It belongs to the chaperonin (HSP60) family. Forms a cylinder of 14 subunits composed of two heptameric rings stacked back-to-back. Interacts with the co-chaperonin GroES.

Its subcellular location is the cytoplasm. It catalyses the reaction ATP + H2O + a folded polypeptide = ADP + phosphate + an unfolded polypeptide.. Its function is as follows. Together with its co-chaperonin GroES, plays an essential role in assisting protein folding. The GroEL-GroES system forms a nano-cage that allows encapsulation of the non-native substrate proteins and provides a physical environment optimized to promote and accelerate protein folding. The sequence is that of Chaperonin GroEL from Xanthomonas campestris pv. phaseoli.